Here is a 274-residue protein sequence, read N- to C-terminus: 4-deoxy-L-threo-5-hexosulose-uronate ketol-isomerase (274 aa).

4 residues coordinate Zn(2+): histidine 192, histidine 194, glutamate 199, and histidine 241.

The protein belongs to the KduI family. Requires Zn(2+) as cofactor.

It carries out the reaction 5-dehydro-4-deoxy-D-glucuronate = 3-deoxy-D-glycero-2,5-hexodiulosonate. The protein operates within glycan metabolism; pectin degradation; 2-dehydro-3-deoxy-D-gluconate from pectin: step 4/5. Functionally, catalyzes the isomerization of 5-dehydro-4-deoxy-D-glucuronate to 3-deoxy-D-glycero-2,5-hexodiulosonate. This is 4-deoxy-L-threo-5-hexosulose-uronate ketol-isomerase from Agrobacterium fabrum (strain C58 / ATCC 33970) (Agrobacterium tumefaciens (strain C58)).